A 168-amino-acid chain; its full sequence is Putative postmeiotic segregation increased 2-like protein 3 (168 aa).

In terms of domain architecture, KRAB spans 8-84 (VSFKDVAVDF…EGEFPCQHSP (77 aa)).

The protein belongs to the DNA mismatch repair MutL/HexB family.

In Homo sapiens (Human), this protein is Putative postmeiotic segregation increased 2-like protein 3 (PMS2P3).